A 260-amino-acid polypeptide reads, in one-letter code: Major prion protein (260 aa).

The signal sequence occupies residues 1–22 (MANLGCWMLVLFVATWSDLGLC). Residues 23–237 (KKRPKPGGWN…ESQAYYQRGS (215 aa)) form an interaction with GRB2, ERI3 and SYN1 region. Positions 26–112 (PKPGGWNTGG…HNQWNKPSKP (87 aa)) are disordered. A run of 6 repeats spans residues 51–58 (PQGGGWGQ), 59–66 (PHGGGWGQ), 67–74 (PHGGGWGQ), 75–82 (PHGGGWGQ), 83–90 (PHGGGWGQ), and 91–98 (PHGGGWGQ). The tract at residues 51 to 98 (PQGGGWGQPHGGGWGQPHGGGWGQPHGGGWGQPHGGGWGQPHGGGWGQ) is 6 X 8 AA tandem repeats of P-H-G-G-G-W-G-Q. A compositionally biased stretch (gly residues) spans 52-102 (QGGGWGQPHGGGWGQPHGGGWGQPHGGGWGQPHGGGWGQPHGGGWGQGGGT). Positions 68, 69, 70, 76, 77, 78, 84, 85, 86, 92, 93, and 94 each coordinate Cu(2+). Cysteine 186 and cysteine 221 are oxidised to a cystine. Residues asparagine 188 and asparagine 204 are each glycosylated (N-linked (GlcNAc...) asparagine). Serine 237 carries the GPI-anchor amidated serine lipid modification. The propeptide at 238–260 (SMVLFSSPPVILLISFLIFLIVG) is removed in mature form.

Belongs to the prion family. Monomer and homodimer. Has a tendency to aggregate into amyloid fibrils containing a cross-beta spine, formed by a steric zipper of superposed beta-strands. Soluble oligomers may represent an intermediate stage on the path to fibril formation. Copper binding may promote oligomerization. Interacts with GRB2, APP, ERI3/PRNPIP and SYN1. Mislocalized cytosolically exposed PrP interacts with MGRN1; this interaction alters MGRN1 subcellular location and causes lysosomal enlargement. Interacts with KIAA1191.

It is found in the cell membrane. The protein localises to the golgi apparatus. Its function is as follows. Its primary physiological function is unclear. Has cytoprotective activity against internal or environmental stresses. May play a role in neuronal development and synaptic plasticity. May be required for neuronal myelin sheath maintenance. May play a role in iron uptake and iron homeostasis. Soluble oligomers are toxic to cultured neuroblastoma cells and induce apoptosis (in vitro). Association with GPC1 (via its heparan sulfate chains) targets PRNP to lipid rafts. Also provides Cu(2+) or Zn(2+) for the ascorbate-mediated GPC1 deaminase degradation of its heparan sulfate side chains. The polypeptide is Major prion protein (PRNP) (Saimiri sciureus (Common squirrel monkey)).